Consider the following 28-residue polypeptide: uncharacterized protein (28 aa).

This is an uncharacterized protein from Escherichia coli (Bacteriophage T4).